A 36-amino-acid polypeptide reads, in one-letter code: Photosystem I reaction center subunit VIII (36 aa).

A helical transmembrane segment spans residues 10–30 (FVPLVGLVFSAIIMVLSFLYI).

The protein belongs to the PsaI family.

The protein localises to the plastid. The protein resides in the chloroplast thylakoid membrane. Functionally, may help in the organization of the PsaL subunit. This chain is Photosystem I reaction center subunit VIII, found in Welwitschia mirabilis (Tree tumbo).